Consider the following 471-residue polypeptide: ATP synthase subunit beta (471 aa).

Residue glycine 152–threonine 159 participates in ATP binding.

Belongs to the ATPase alpha/beta chains family. As to quaternary structure, F-type ATPases have 2 components, CF(1) - the catalytic core - and CF(0) - the membrane proton channel. CF(1) has five subunits: alpha(3), beta(3), gamma(1), delta(1), epsilon(1). CF(0) has three main subunits: a(1), b(2) and c(9-12). The alpha and beta chains form an alternating ring which encloses part of the gamma chain. CF(1) is attached to CF(0) by a central stalk formed by the gamma and epsilon chains, while a peripheral stalk is formed by the delta and b chains.

It is found in the cell membrane. It catalyses the reaction ATP + H2O + 4 H(+)(in) = ADP + phosphate + 5 H(+)(out). Its function is as follows. Produces ATP from ADP in the presence of a proton gradient across the membrane. The catalytic sites are hosted primarily by the beta subunits. The chain is ATP synthase subunit beta from Herpetosiphon aurantiacus (strain ATCC 23779 / DSM 785 / 114-95).